The primary structure comprises 320 residues: ATP-dependent 6-phosphofructokinase (320 aa).

Position 12 (G12) interacts with ATP. 22-26 (RGVVR) contacts ADP. ATP-binding positions include 73–74 (RF) and 103–106 (GDGS). Mg(2+) is bound at residue D104. Position 126-128 (126-128 (TID)) interacts with substrate. The Proton acceptor role is filled by D128. R155 provides a ligand contact to ADP. Substrate-binding positions include R163 and 170–172 (MGR). ADP-binding positions include 186–188 (GCE), K212, and 214–216 (KKH). Substrate contacts are provided by residues E223, R244, and 250-253 (HIQR).

It belongs to the phosphofructokinase type A (PFKA) family. ATP-dependent PFK group I subfamily. Prokaryotic clade 'B1' sub-subfamily. As to quaternary structure, homotetramer. Mg(2+) serves as cofactor.

Its subcellular location is the cytoplasm. It catalyses the reaction beta-D-fructose 6-phosphate + ATP = beta-D-fructose 1,6-bisphosphate + ADP + H(+). Its pathway is carbohydrate degradation; glycolysis; D-glyceraldehyde 3-phosphate and glycerone phosphate from D-glucose: step 3/4. Its activity is regulated as follows. Allosterically activated by ADP and other diphosphonucleosides, and allosterically inhibited by phosphoenolpyruvate. Functionally, catalyzes the phosphorylation of D-fructose 6-phosphate to fructose 1,6-bisphosphate by ATP, the first committing step of glycolysis. The protein is ATP-dependent 6-phosphofructokinase of Photobacterium profundum (strain SS9).